Consider the following 500-residue polypeptide: Cytochrome P450 71B35 (500 aa).

The helical transmembrane segment at 1–21 threads the bilayer; that stretch reads MAHIWLLPLIFLVCILLAVFN. Residue Cys-439 coordinates heme.

The protein belongs to the cytochrome P450 family. Requires heme as cofactor.

Its subcellular location is the membrane. In Arabidopsis thaliana (Mouse-ear cress), this protein is Cytochrome P450 71B35 (CYP71B35).